The following is a 413-amino-acid chain: Lysosomal phospholipase A and acyltransferase (413 aa).

Positions 1–33 (MDRHLCICREIQLRSGLLFPFLLLMMLADLALP) are cleaved as a signal peptide. A substrate-binding site is contributed by Asp-46. A disulfide bridge links Cys-65 with Cys-89. N-linked (GlcNAc...) asparagine glycosylation is present at Asn-99. The active-site Acyl-ester intermediate is the Ser-198. Ser-198 is a binding site for Zn(2+). Substrate is bound at residue Met-199. N-linked (GlcNAc...) asparagine glycans are attached at residues Asn-273 and Asn-289. Residue Cys-355 coordinates Zn(2+). Active-site charge relay system residues include Asp-360 and His-392. Zn(2+) is bound at residue His-392. Asn-398 is a glycosylation site (N-linked (GlcNAc...) asparagine).

The protein belongs to the AB hydrolase superfamily. Lipase family. N-glycosylated. N-glycosylation is important for maturation of the enzyme and normal subcellular location. In terms of tissue distribution, detected in alveolar macrophages (at protein level). Widely expressed. Expressed at highest levels in alveolar macrophages.

The protein resides in the lysosome. Its subcellular location is the secreted. It localises to the membrane. The enzyme catalyses a 1,2-diacyl-sn-glycero-3-phosphocholine + H2O = a 2-acyl-sn-glycero-3-phosphocholine + a fatty acid + H(+). It carries out the reaction 1,2-dihexadecanoyl-sn-glycero-3-phosphocholine + H2O = 2-hexadecanoyl-sn-glycero-3-phosphocholine + hexadecanoate + H(+). It catalyses the reaction 1-hexadecanoyl-2-(9Z-octadecenoyl)-sn-glycero-3-phosphocholine + H2O = 2-(9Z-octadecenoyl)-sn-glycero-3-phosphocholine + hexadecanoate + H(+). The catalysed reaction is 1,2-di-(9Z-octadecenoyl)-sn-glycero-3-phosphocholine + H2O = 2-(9Z-octadecenoyl)-sn-glycero-3-phosphocholine + (9Z)-octadecenoate + H(+). The enzyme catalyses 1-hexadecanoyl-2-glutaroyl-sn-glycero-3-phosphocholine + H2O = 2-glutaroyl-sn-glycero-3-phosphocholine + hexadecanoate + H(+). It carries out the reaction 1-hexadecanoyl-2-nonadioyl-sn-glycero-3-phosphocholine + H2O = 2-nonadioyl-sn-glycero-3-phosphocholine + hexadecanoate + H(+). It catalyses the reaction 1-hexadecanoyl-2-(5-oxopentanoyl)-sn-glycero-3-phosphocholine + H2O = 2-(5-oxopentanoyl)-sn-glycero-3-phosphocholine + hexadecanoate + H(+). The catalysed reaction is 1-hexadecanoyl-2-(9-oxononanoyl)-sn-glycero-3-phosphocholine + H2O = 2-(9-oxononanoyl)-sn-glycero-3-phosphocholine + hexadecanoate + H(+). The enzyme catalyses a 1,2-diacyl-sn-glycero-3-phosphocholine + H2O = a 1-acyl-sn-glycero-3-phosphocholine + a fatty acid + H(+). It carries out the reaction 1,2-dihexadecanoyl-sn-glycero-3-phosphocholine + H2O = 1-hexadecanoyl-sn-glycero-3-phosphocholine + hexadecanoate + H(+). It catalyses the reaction 1-hexadecanoyl-2-(9Z-octadecenoyl)-sn-glycero-3-phosphocholine + H2O = 1-hexadecanoyl-sn-glycero-3-phosphocholine + (9Z)-octadecenoate + H(+). The catalysed reaction is 1,2-di-(9Z-octadecenoyl)-sn-glycero-3-phosphocholine + H2O = 1-(9Z-octadecenoyl)-sn-glycero-3-phosphocholine + (9Z)-octadecenoate + H(+). The enzyme catalyses a 1-acyl-sn-glycero-3-phosphocholine + H2O = sn-glycerol 3-phosphocholine + a fatty acid + H(+). It carries out the reaction 1-hexadecanoyl-sn-glycero-3-phosphocholine + H2O = sn-glycerol 3-phosphocholine + hexadecanoate + H(+). It catalyses the reaction N-(acetyl)-sphing-4-enine + a 1,2-diacyl-sn-glycero-3-phosphoethanolamine = 1-O-acyl-N-(acetyl)-sphing-4-enine + a 2-acyl-sn-glycero-3-phosphoethanolamine. The catalysed reaction is 1-hexadecanoyl-2-(9Z-octadecenoyl)-sn-glycero-3-phosphoethanolamine + N-(acetyl)-sphing-4-enine = 2-(9Z-octadecenoyl)-sn-glycero-3-phosphoethanolamine + 1-hexadecanoyl-N-(acetyl)-sphing-4-enine. The enzyme catalyses 1-hexadecanoyl-2-(9Z,12Z-octadecadienoyl)-sn-glycero-3-phosphoethanolamine + N-(acetyl)-sphing-4-enine = 2-(9Z,12Z)-octadecadienoyl-sn-glycero-3-phosphoethanolamine + 1-hexadecanoyl-N-(acetyl)-sphing-4-enine. It carries out the reaction 1-hexadecanoyl-2-(5Z,8Z,11Z,14Z-eicosatetraenoyl)-sn-glycero-3-phosphoethanolamine + N-(acetyl)-sphing-4-enine = 2-(5Z,8Z,11Z,14Z)-eicosatetraenoyl-sn-glycero-3-phosphoethanolamine + 1-hexadecanoyl-N-(acetyl)-sphing-4-enine. It catalyses the reaction N-(acetyl)-sphing-4-enine + a 1,2-diacyl-sn-glycero-3-phosphoethanolamine = 1-O-acyl-N-(acetyl)-sphing-4-enine + a 1-acyl-sn-glycero-3-phosphoethanolamine. The catalysed reaction is 1-hexadecanoyl-2-(9Z-octadecenoyl)-sn-glycero-3-phosphoethanolamine + N-(acetyl)-sphing-4-enine = 1-(9Z-octadecenoyl)-N-(acetyl)-sphing-4-enine + 1-hexadecanoyl-sn-glycero-3-phosphoethanolamine. The enzyme catalyses 1-hexadecanoyl-2-(9Z,12Z-octadecadienoyl)-sn-glycero-3-phosphoethanolamine + N-(acetyl)-sphing-4-enine = 1-(9Z,12Z-octadecadienoyl)-N-acetylsphing-4-enine + 1-hexadecanoyl-sn-glycero-3-phosphoethanolamine. It carries out the reaction 1-hexadecanoyl-2-(5Z,8Z,11Z,14Z-eicosatetraenoyl)-sn-glycero-3-phosphoethanolamine + N-(acetyl)-sphing-4-enine = 1-(5Z,8Z,11Z,14Z)-eicosatetraenoyl-N-(acetyl)-sphing-4-enine + 1-hexadecanoyl-sn-glycero-3-phosphoethanolamine. It catalyses the reaction N-(acetyl)-sphing-4-enine + a 1,2-diacyl-sn-glycero-3-phosphocholine = 1-O-acyl-N-(acetyl)-sphing-4-enine + a 2-acyl-sn-glycero-3-phosphocholine. The catalysed reaction is 1-hexadecanoyl-2-(9Z-octadecenoyl)-sn-glycero-3-phosphocholine + N-(acetyl)-sphing-4-enine = 1-hexadecanoyl-N-(acetyl)-sphing-4-enine + 2-(9Z-octadecenoyl)-sn-glycero-3-phosphocholine. The enzyme catalyses 1-hexadecanoyl-2-(9Z,12Z-octadecadienoyl)-sn-glycero-3-phosphocholine + N-(acetyl)-sphing-4-enine = 2-(9Z,12Z-octadecadienoyl)-sn-glycero-3-phosphocholine + 1-hexadecanoyl-N-(acetyl)-sphing-4-enine. It carries out the reaction 1-hexadecanoyl-2-(5Z,8Z,11Z,14Z-eicosatetraenoyl)-sn-glycero-3-phosphocholine + N-(acetyl)-sphing-4-enine = 1-hexadecanoyl-N-(acetyl)-sphing-4-enine + 2-(5Z,8Z,11Z,14Z)-eicosatetraenoyl-sn-glycero-3-phosphocholine. It catalyses the reaction 1-hexadecanoyl-2-(4Z,7Z,10Z,13Z,16Z,19Z-docosahexaenoyl)-sn-glycero-3-phosphocholine + N-(acetyl)-sphing-4-enine = 2-(4Z,7Z,10Z,13Z,16Z,19Z-docosahexaenoyl)-sn-glycero-3-phosphocholine + 1-hexadecanoyl-N-(acetyl)-sphing-4-enine. The catalysed reaction is 1-hexadecanoyl-2-nonadioyl-sn-glycero-3-phosphocholine + N-(acetyl)-sphing-4-enine = 2-nonadioyl-sn-glycero-3-phosphocholine + 1-hexadecanoyl-N-(acetyl)-sphing-4-enine. The enzyme catalyses 1-octadecanoyl-2-(9Z-octadecenoyl)-sn-glycero-3-phosphocholine + N-(acetyl)-sphing-4-enine = 1-octadecanoyl-N-(acetyl)-sphing-4-enine + 2-(9Z-octadecenoyl)-sn-glycero-3-phosphocholine. It carries out the reaction 1-(9Z)-octadecenoyl-2-octadecanoyl-sn-glycero-3-phosphocholine + N-(acetyl)-sphing-4-enine = 2-octadecanoyl-sn-glycero-3-phosphocholine + 1-(9Z-octadecenoyl)-N-(acetyl)-sphing-4-enine. It catalyses the reaction 1-octadecanoyl-2-(5Z,8Z,11Z,14Z-eicosatetraenoyl)-sn-glycero-3-phosphocholine + N-(acetyl)-sphing-4-enine = 1-octadecanoyl-N-(acetyl)-sphing-4-enine + 2-(5Z,8Z,11Z,14Z)-eicosatetraenoyl-sn-glycero-3-phosphocholine. The catalysed reaction is 1-(9Z-octadecenoyl)-2-hexadecanoyl-sn-glycero-3-phosphocholine + N-(acetyl)-sphing-4-enine = 1-(9Z-octadecenoyl)-N-(acetyl)-sphing-4-enine + 2-hexadecanoyl-sn-glycero-3-phosphocholine. The enzyme catalyses N-(acetyl)-sphing-4-enine + a 1,2-diacyl-sn-glycero-3-phosphocholine = 1-O-acyl-N-(acetyl)-sphing-4-enine + a 1-acyl-sn-glycero-3-phosphocholine. It carries out the reaction 1-hexadecanoyl-2-(9Z-octadecenoyl)-sn-glycero-3-phosphocholine + N-(acetyl)-sphing-4-enine = 1-(9Z-octadecenoyl)-N-(acetyl)-sphing-4-enine + 1-hexadecanoyl-sn-glycero-3-phosphocholine. It catalyses the reaction 1-hexadecanoyl-2-(9Z,12Z-octadecadienoyl)-sn-glycero-3-phosphocholine + N-(acetyl)-sphing-4-enine = 1-(9Z,12Z-octadecadienoyl)-N-acetylsphing-4-enine + 1-hexadecanoyl-sn-glycero-3-phosphocholine. The catalysed reaction is 1-hexadecanoyl-2-(5Z,8Z,11Z,14Z-eicosatetraenoyl)-sn-glycero-3-phosphocholine + N-(acetyl)-sphing-4-enine = 1-(5Z,8Z,11Z,14Z)-eicosatetraenoyl-N-(acetyl)-sphing-4-enine + 1-hexadecanoyl-sn-glycero-3-phosphocholine. The enzyme catalyses 1-hexadecanoyl-2-(4Z,7Z,10Z,13Z,16Z,19Z-docosahexaenoyl)-sn-glycero-3-phosphocholine + N-(acetyl)-sphing-4-enine = 1-(4Z,7Z,10Z,13Z,16Z,19Z-docosahexaenoyl)-N-(acetyl)-sphing-4-enine + 1-hexadecanoyl-sn-glycero-3-phosphocholine. It carries out the reaction 1-octadecanoyl-2-(9Z-octadecenoyl)-sn-glycero-3-phosphocholine + N-(acetyl)-sphing-4-enine = 1-(9Z-octadecenoyl)-N-(acetyl)-sphing-4-enine + 1-octadecanoyl-sn-glycero-3-phosphocholine. It catalyses the reaction 1-octadecanoyl-2-(9Z,12Z)-octadecadienoyl-sn-glycero-3-phosphocholine + N-(acetyl)-sphing-4-enine = 1-(9Z,12Z-octadecadienoyl)-N-acetylsphing-4-enine + 1-octadecanoyl-sn-glycero-3-phosphocholine. The catalysed reaction is 1-(9Z-octadecenoyl)-2-hexadecanoyl-sn-glycero-3-phosphocholine + N-(acetyl)-sphing-4-enine = 1-hexadecanoyl-N-(acetyl)-sphing-4-enine + 1-(9Z-octadecenoyl)-sn-glycero-3-phosphocholine. The enzyme catalyses 1-(9Z)-octadecenoyl-2-octadecanoyl-sn-glycero-3-phosphocholine + N-(acetyl)-sphing-4-enine = 1-octadecanoyl-N-(acetyl)-sphing-4-enine + 1-(9Z-octadecenoyl)-sn-glycero-3-phosphocholine. It carries out the reaction 1,2-di-(9Z-octadecenoyl)-sn-glycero-3-phosphocholine + N-(acetyl)-sphing-4-enine = 1-(9Z-octadecenoyl)-N-(acetyl)-sphing-4-enine + 1-(9Z-octadecenoyl)-sn-glycero-3-phosphocholine. It catalyses the reaction 1-octadecanoyl-2-(5Z,8Z,11Z,14Z-eicosatetraenoyl)-sn-glycero-3-phosphocholine + N-(acetyl)-sphing-4-enine = 1-(5Z,8Z,11Z,14Z)-eicosatetraenoyl-N-(acetyl)-sphing-4-enine + 1-octadecanoyl-sn-glycero-3-phosphocholine. The catalysed reaction is a 1,2-diacyl-sn-glycero-3-phospho-L-serine + N-(acetyl)-sphing-4-enine = a 2-acyl-sn-glycero-3-phospho-L-serine + 1-O-acyl-N-(acetyl)-sphing-4-enine. The enzyme catalyses 1-octadecanoyl-2-(9Z-octadecenoyl)-sn-glycero-3-phospho-L-serine + N-(acetyl)-sphing-4-enine = 2-(9Z-octadecenoyl)-sn-glycero-3-phospho-L-serine + 1-octadecanoyl-N-(acetyl)-sphing-4-enine. It carries out the reaction a 1,2-diacyl-sn-glycero-3-phospho-L-serine + N-(acetyl)-sphing-4-enine = 1-O-acyl-N-(acetyl)-sphing-4-enine + a 1-acyl-sn-glycero-3-phospho-L-serine. It catalyses the reaction 1-octadecanoyl-2-(9Z-octadecenoyl)-sn-glycero-3-phospho-L-serine + N-(acetyl)-sphing-4-enine = 1-octadecanoyl-sn-glycero-3-phosphoserine + 1-(9Z-octadecenoyl)-N-(acetyl)-sphing-4-enine. The catalysed reaction is a 1,2-diacyl-sn-glycero-3-phospho-(1'-sn-glycerol) + N-(acetyl)-sphing-4-enine = 2-acyl-sn-glycero-3-phospho-(1'-sn-glycerol) + 1-O-acyl-N-(acetyl)-sphing-4-enine. The enzyme catalyses 1-octadecanoyl-2-(9Z-octadecenoyl)-sn-glycero-3-phospho-(1'-sn-glycerol) + N-(acetyl)-sphing-4-enine = 2-(9Z-octadecenoyl)-sn-glycero-3-phospho-(1'-sn-glycerol) + 1-octadecanoyl-N-(acetyl)-sphing-4-enine. It carries out the reaction a 1,2-diacyl-sn-glycero-3-phospho-(1'-sn-glycerol) + N-(acetyl)-sphing-4-enine = 1-O-acyl-N-(acetyl)-sphing-4-enine + 1-acyl-sn-glycero-3-phospho-(1'-sn-glycerol). It catalyses the reaction 1-octadecanoyl-2-(9Z-octadecenoyl)-sn-glycero-3-phospho-(1'-sn-glycerol) + N-(acetyl)-sphing-4-enine = 1-octadecanoyl-sn-glycero-3-phospho-(1'-sn-glycerol) + 1-(9Z-octadecenoyl)-N-(acetyl)-sphing-4-enine. The catalysed reaction is an N-acylethanolamine + a 1,2-diacyl-sn-glycero-3-phosphocholine = 2-(acylamino)ethyl fatty acid + a 2-acyl-sn-glycero-3-phosphocholine. The enzyme catalyses an N-acylethanolamine + a 1,2-diacyl-sn-glycero-3-phosphocholine = 2-(acylamino)ethyl fatty acid + a 1-acyl-sn-glycero-3-phosphocholine. It carries out the reaction N-(5Z,8Z,11Z,14Z-eicosatetraenoyl)-ethanolamine + 1,2-di-(9Z-octadecenoyl)-sn-glycero-3-phosphocholine = 2-[(5Z,8Z,11Z,14Z)-eicosatetraenoylamino]ethyl (9Z)-octadecenoate + (9Z-octadecenoyl)-sn-glycero-3-phosphocholine. It catalyses the reaction N-(9Z-octadecenoyl) ethanolamine + 1,2-di-(9Z-octadecenoyl)-sn-glycero-3-phosphocholine = 2-[(9Z)-octadecenoylamino]ethyl (9Z)-octadecenoate + (9Z-octadecenoyl)-sn-glycero-3-phosphocholine. The catalysed reaction is a 3-acyl-sn-glycerol + a 1,2-diacyl-sn-glycero-3-phosphocholine = a 1,3-diacylglycerol + a 1-acyl-sn-glycero-3-phosphocholine. The enzyme catalyses a 3-acyl-sn-glycerol + a 1,2-diacyl-sn-glycero-3-phosphocholine = a 1,3-diacylglycerol + a 2-acyl-sn-glycero-3-phosphocholine. It carries out the reaction 3-(9Z-octadecenoyl)-sn-glycerol + 1,2-di-(9Z-octadecenoyl)-sn-glycero-3-phosphocholine = 1,3-di-(9Z-octadecenoyl)-glycerol + (9Z-octadecenoyl)-sn-glycero-3-phosphocholine. It catalyses the reaction 3-hexadecanoyl-sn-glycerol + 1,2-di-(9Z-octadecenoyl)-sn-glycero-3-phosphocholine = 1-(9Z)-octadecenoyl-3-hexadecanoyl-sn-glycerol + (9Z-octadecenoyl)-sn-glycero-3-phosphocholine. The catalysed reaction is a 1-acyl-sn-glycerol + a 1,2-diacyl-sn-glycero-3-phosphocholine = a 1,3-diacylglycerol + a 2-acyl-sn-glycero-3-phosphocholine. The enzyme catalyses a 1-acyl-sn-glycerol + a 1,2-diacyl-sn-glycero-3-phosphocholine = a 1,3-diacylglycerol + a 1-acyl-sn-glycero-3-phosphocholine. It carries out the reaction 1-(9Z-octadecenoyl)-sn-glycerol + 1,2-di-(9Z-octadecenoyl)-sn-glycero-3-phosphocholine = 1,3-di-(9Z-octadecenoyl)-glycerol + (9Z-octadecenoyl)-sn-glycero-3-phosphocholine. It catalyses the reaction 1-hexadecanoyl-sn-glycerol + 1,2-di-(9Z-octadecenoyl)-sn-glycero-3-phosphocholine = 1-hexadecanoyl-3-(9Z)-octadecenoyl-sn-glycerol + (9Z-octadecenoyl)-sn-glycero-3-phosphocholine. The catalysed reaction is a 2-acylglycerol + a 1,2-diacyl-sn-glycero-3-phosphocholine = a 1,2-diacylglycerol + a 2-acyl-sn-glycero-3-phosphocholine. The enzyme catalyses a 2-acylglycerol + a 1,2-diacyl-sn-glycero-3-phosphocholine = a 1,2-diacylglycerol + a 1-acyl-sn-glycero-3-phosphocholine. It carries out the reaction 2-hexadecanoylglycerol + 1,2-di-(9Z-octadecenoyl)-sn-glycero-3-phosphocholine = 1-(9Z)-octadecenoyl-2-hexadecanoylglycerol + (9Z-octadecenoyl)-sn-glycero-3-phosphocholine. It catalyses the reaction 1-O-alkylglycerol + a 1,2-diacyl-sn-glycero-3-phosphocholine = 1-O-alkyl-3-acylglycerol + a 1-acyl-sn-glycero-3-phosphocholine. The catalysed reaction is 1-O-alkylglycerol + a 1,2-diacyl-sn-glycero-3-phosphocholine = 1-O-alkyl-3-acylglycerol + a 2-acyl-sn-glycero-3-phosphocholine. The enzyme catalyses 1-O-hexadecylglycerol + 1,2-di-(9Z-octadecenoyl)-sn-glycero-3-phosphocholine = 1-O-hexadecyl-3-(9Z)-octadecenoylglycerol + (9Z-octadecenoyl)-sn-glycero-3-phosphocholine. It carries out the reaction 1-O-alkyl-2-acyl-sn-glycerol + a 1,2-diacyl-sn-glycero-3-phosphocholine = 1-O-alkyl-2,3-diacyl-sn-glycerol + a 2-acyl-sn-glycero-3-phosphocholine. It catalyses the reaction 1-O-alkyl-2-acyl-sn-glycerol + a 1,2-diacyl-sn-glycero-3-phosphocholine = 1-O-alkyl-2,3-diacyl-sn-glycerol + a 1-acyl-sn-glycero-3-phosphocholine. The catalysed reaction is 1-O-hexadecyl-2-acetyl-sn-glycerol + 1,2-di-(9Z-octadecenoyl)-sn-glycero-3-phosphocholine = 1-O-hexadecyl-2-acetyl-3-(9Z)-octadecenoyl-sn-glycerol + (9Z-octadecenoyl)-sn-glycero-3-phosphocholine. The enzyme catalyses 1-O-hexadecyl-2-O-methyl-sn-glycerol + 1,2-di-(9Z-octadecenoyl)-sn-glycero-3-phosphocholine = 1-O-hexadecyl-2-O-methyl-3-(9Z)-octadecenoyl-sn-glycerol + (9Z-octadecenoyl)-sn-glycero-3-phosphocholine. It carries out the reaction a 1,2-diacyl-sn-glycero-3-phosphoethanolamine + H2O = a 1-acyl-sn-glycero-3-phosphoethanolamine + a fatty acid + H(+). It catalyses the reaction 1-acyl-2-(5Z,8Z,11Z,14Z)-eicosatetraenoyl-sn-glycero-3-phosphoethanolamine + H2O = a 1-acyl-sn-glycero-3-phosphoethanolamine + (5Z,8Z,11Z,14Z)-eicosatetraenoate + H(+). The catalysed reaction is a 1,2-diacyl-sn-glycero-3-phospho-(1'-sn-glycerol) + H2O = 1-acyl-sn-glycero-3-phospho-(1'-sn-glycerol) + a fatty acid + H(+). The enzyme catalyses 1-hexadecanoyl-2-(9Z-octadecenoyl)-sn-glycero-3-phospho-(1'-sn-glycerol) + H2O = 1-hexadecanoyl-sn-glycero-3-phospho-(1'-sn-glycerol) + (9Z)-octadecenoate + H(+). It carries out the reaction a 1,2-diacyl-sn-glycero-3-phospho-(1'-sn-glycerol) + H2O = 2-acyl-sn-glycero-3-phospho-(1'-sn-glycerol) + a fatty acid + H(+). It catalyses the reaction 1-hexadecanoyl-2-(9Z-octadecenoyl)-sn-glycero-3-phospho-(1'-sn-glycerol) + H2O = 2-(9Z-octadecenoyl)-sn-glycero-3-phospho-(1'-sn-glycerol) + hexadecanoate + H(+). Transacylase activity is inhibited by MJ33. In terms of biological role, has dual calcium-independent phospholipase and O-acyltransferase activities with a potential role in glycerophospholipid homeostasis and remodeling of acyl groups of lipophilic alcohols present in acidic cellular compartments. Catalyzes hydrolysis of the ester bond of the fatty acyl group attached at sn-1 or sn-2 position of phospholipids (phospholipase A1 or A2 activity) and transfer it to the hydroxyl group at the first carbon of lipophilic alcohols (O-acyltransferase activity). Among preferred fatty acyl donors are phosphatidylcholines, phosphatidylethanolamines, phosphatidylglycerols and phosphatidylserines. Favors sn-2 over sn-1 deacylation of unsaturated fatty acyl groups of phosphatidylcholines, phosphatidylethanolamines, and phosphatidylglycerols. Among preferred fatty acyl acceptors are natural lipophilic alcohols including short-chain ceramide N-acetyl-sphingosine (C2 ceramide), alkylacylglycerols, monoacylglycerols, and acylethanolamides such as anandamide and oleoylethanolamide. Selectively hydrolyzes the sn-1 fatty acyl group of truncated oxidized phospholipids and may play a role in detoxification of reactive oxidized phospholipids during oxidative stress. Required for normal phospholipid degradation in alveolar macrophages with potential implications in the clearance of pulmonary surfactant, which is mainly composed of dipalmitoylphosphatidylcholine (1,2-dihexadecanoyl-sn-glycero-3-phosphocholine). Involved in the first step of bis(monoacylglycero)phosphate (BMP) de novo synthesis from phosphatidylglycerol (1,2-diacyl-sn-glycero-3-phospho-(1'-sn-glycerol), PG). BMP is an important player in cargo sorting and degradation, regulation of cellular cholesterol levels and intercellular communication. At neutral pH, hydrolyzes the sn-1 fatty acyl group of the lysophosphatidylcholines. The polypeptide is Lysosomal phospholipase A and acyltransferase (Pla2g15) (Rattus norvegicus (Rat)).